The primary structure comprises 283 residues: Pantothenate synthetase (283 aa).

Residue 30-37 participates in ATP binding; that stretch reads MGNLHAGH. Histidine 37 serves as the catalytic Proton donor. Glutamine 61 contacts (R)-pantoate. Glutamine 61 contacts beta-alanine. 149 to 152 serves as a coordination point for ATP; sequence GEKD. Residue glutamine 155 coordinates (R)-pantoate. Residues valine 178 and 186-189 contribute to the ATP site; that span reads LSSR.

It belongs to the pantothenate synthetase family. Homodimer.

The protein localises to the cytoplasm. The enzyme catalyses (R)-pantoate + beta-alanine + ATP = (R)-pantothenate + AMP + diphosphate + H(+). It functions in the pathway cofactor biosynthesis; (R)-pantothenate biosynthesis; (R)-pantothenate from (R)-pantoate and beta-alanine: step 1/1. Catalyzes the condensation of pantoate with beta-alanine in an ATP-dependent reaction via a pantoyl-adenylate intermediate. The protein is Pantothenate synthetase of Pseudomonas paraeruginosa (strain DSM 24068 / PA7) (Pseudomonas aeruginosa (strain PA7)).